Here is a 193-residue protein sequence, read N- to C-terminus: Xanthine phosphoribosyltransferase (193 aa).

2 residues coordinate xanthine: Leu-20 and Thr-27. 128–132 (ANGQA) is a binding site for 5-phospho-alpha-D-ribose 1-diphosphate. Residue Lys-156 coordinates xanthine.

It belongs to the purine/pyrimidine phosphoribosyltransferase family. Xpt subfamily. As to quaternary structure, homodimer.

It localises to the cytoplasm. The catalysed reaction is XMP + diphosphate = xanthine + 5-phospho-alpha-D-ribose 1-diphosphate. It functions in the pathway purine metabolism; XMP biosynthesis via salvage pathway; XMP from xanthine: step 1/1. Its function is as follows. Converts the preformed base xanthine, a product of nucleic acid breakdown, to xanthosine 5'-monophosphate (XMP), so it can be reused for RNA or DNA synthesis. This is Xanthine phosphoribosyltransferase from Streptococcus pyogenes serotype M49 (strain NZ131).